A 377-amino-acid polypeptide reads, in one-letter code: Terpene synthase 1 (377 aa).

Positions 81–86 (DDALDA) match the DDxx(x)D/E motif motif. The NDxxSxxxD/E motif motif lies at 221 to 229 (NDLVSYEKE). The interval 326 to 359 (RKQSSSPNLTNSISIPTNNTNNSNNITSSPNKKQ) is disordered. The segment covering 335–356 (TNSISIPTNNTNNSNNITSSPN) has biased composition (low complexity).

It belongs to the terpene synthase family.

It carries out the reaction (2E,6E)-farnesyl diphosphate = (2S,3R,6S,9S)-(-)-protoillud-7-ene + diphosphate. Terpene synthase that converts its substrate farnesyl diphosphate (FPP) into the sesquiterpene protoillud-7-ene. This chain is Terpene synthase 1, found in Dictyostelium purpureum (Slime mold).